Reading from the N-terminus, the 317-residue chain is Porphobilinogen deaminase (317 aa).

An S-(dipyrrolylmethanemethyl)cysteine modification is found at C245.

This sequence belongs to the HMBS family. In terms of assembly, monomer. It depends on dipyrromethane as a cofactor.

The catalysed reaction is 4 porphobilinogen + H2O = hydroxymethylbilane + 4 NH4(+). It participates in porphyrin-containing compound metabolism; protoporphyrin-IX biosynthesis; coproporphyrinogen-III from 5-aminolevulinate: step 2/4. The protein operates within porphyrin-containing compound metabolism; chlorophyll biosynthesis. In terms of biological role, tetrapolymerization of the monopyrrole PBG into the hydroxymethylbilane pre-uroporphyrinogen in several discrete steps. This is Porphobilinogen deaminase from Prochlorococcus marinus (strain MIT 9303).